The following is an 883-amino-acid chain: Bifunctional heparan sulfate N-deacetylase/N-sulfotransferase 2 (883 aa).

The Cytoplasmic segment spans residues 1 to 18; it reads MLQLWKVVRPARQLELHR. The helical; Signal-anchor for type II membrane protein transmembrane segment at 19-39 threads the bilayer; that stretch reads LILLLIAFSLGSMGFLAYYVS. Over 40 to 883 the chain is Lumenal; sequence TSPKAKEPLP…REELQHSSLG (844 aa). Residues 41–597 are heparan sulfate N-deacetylase 2; that stretch reads SPKAKEPLPL…KRHKDIWSKE (557 aa). The disordered stretch occupies residues 49-81; that stretch reads PLPLGDCSSGGAAGPGPARPPVPPRPPRPPETA. The span at 65 to 78 shows a compositional bias: pro residues; the sequence is PARPPVPPRPPRPP. N-linked (GlcNAc...) asparagine glycosylation is found at Asn-233, Asn-350, and Asn-400. A heparan sulfate N-sulfotransferase 2 region spans residues 598-883; the sequence is KTCDRLPKFL…REELQHSSLG (286 aa). The active-site For sulfotransferase activity is the Lys-613. Residue 613–617 coordinates 3'-phosphoadenylyl sulfate; sequence KTGTT. Asn-666 is a glycosylation site (N-linked (GlcNAc...) asparagine). Ser-711 is a 3'-phosphoadenylyl sulfate binding site. Residues Asn-726 and Asn-802 are each glycosylated (N-linked (GlcNAc...) asparagine). Cys-817 and Cys-827 are disulfide-bonded. 832–836 contributes to the 3'-phosphoadenylyl sulfate binding site; that stretch reads KGRRY.

This sequence belongs to the sulfotransferase 1 family. NDST subfamily. In terms of assembly, monomer.

The protein localises to the golgi apparatus membrane. It carries out the reaction alpha-D-glucosaminyl-[heparan sulfate](n) + 3'-phosphoadenylyl sulfate = N-sulfo-alpha-D-glucosaminyl-[heparan sulfate](n) + adenosine 3',5'-bisphosphate + 2 H(+). Its pathway is glycan metabolism; heparan sulfate biosynthesis. It functions in the pathway glycan metabolism; heparin biosynthesis. In terms of biological role, essential bifunctional enzyme that catalyzes both the N-deacetylation and the N-sulfation of glucosamine (GlcNAc) of the glycosaminoglycan in heparan sulfate. Modifies the GlcNAc-GlcA disaccharide repeating sugar backbone to make N-sulfated heparosan, a prerequisite substrate for later modifications in heparin biosynthesis. Plays a role in determining the extent and pattern of sulfation of heparan sulfate. Required for the exosomal release of SDCBP, CD63 and syndecan. This chain is Bifunctional heparan sulfate N-deacetylase/N-sulfotransferase 2 (NDST2), found in Homo sapiens (Human).